Reading from the N-terminus, the 286-residue chain is Polyamine aminopropyltransferase (286 aa).

The region spanning 5–238 (KTWHEKLYCH…GVMVFAWGTN (234 aa)) is the PABS domain. Residues His64 and Asp88 each contribute to the spermidine site. S-methyl-5'-thioadenosine contacts are provided by residues Glu108 and 140-141 (DG). Asp158 acts as the Proton acceptor in catalysis. Spermidine is bound at residue 158 to 161 (DSTD).

Belongs to the spermidine/spermine synthase family. In terms of assembly, homodimer or homotetramer.

The protein localises to the cytoplasm. It carries out the reaction S-adenosyl 3-(methylsulfanyl)propylamine + putrescine = S-methyl-5'-thioadenosine + spermidine + H(+). The protein operates within amine and polyamine biosynthesis; spermidine biosynthesis; spermidine from putrescine: step 1/1. Functionally, catalyzes the irreversible transfer of a propylamine group from the amino donor S-adenosylmethioninamine (decarboxy-AdoMet) to putrescine (1,4-diaminobutane) to yield spermidine. This is Polyamine aminopropyltransferase from Buchnera aphidicola subsp. Acyrthosiphon pisum (strain 5A).